Here is a 593-residue protein sequence, read N- to C-terminus: Aspartate--tRNA(Asp/Asn) ligase (593 aa).

An L-aspartate-binding site is contributed by Glu173. The tract at residues Gln197 to Lys200 is aspartate. Arg219 is a binding site for L-aspartate. ATP is bound by residues Arg219–Glu221 and Gln228. His451 provides a ligand contact to L-aspartate. Residue Glu485 participates in ATP binding. Position 492 (Arg492) interacts with L-aspartate. ATP is bound at residue Gly537–Arg540.

This sequence belongs to the class-II aminoacyl-tRNA synthetase family. Type 1 subfamily. Homodimer.

It is found in the cytoplasm. The catalysed reaction is tRNA(Asx) + L-aspartate + ATP = L-aspartyl-tRNA(Asx) + AMP + diphosphate. Its function is as follows. Aspartyl-tRNA synthetase with relaxed tRNA specificity since it is able to aspartylate not only its cognate tRNA(Asp) but also tRNA(Asn). Reaction proceeds in two steps: L-aspartate is first activated by ATP to form Asp-AMP and then transferred to the acceptor end of tRNA(Asp/Asn). This chain is Aspartate--tRNA(Asp/Asn) ligase, found in Legionella pneumophila (strain Paris).